The sequence spans 356 residues: MGLLRIMMPPKLQLLAVVAFAVAMLFLENQIQKLEESRAKLERAIARHEVREIEQRHTMDGPRQDATLDEEEDIIIIYNRVPKTASTSFTNIAYDLCAKNRYHVLHINTTKNNPVMSLQDQVRFVKNITTWNEMKPGFYHGHISYLDFAKFGVKKKPIYINVIRDPIERLVSYYYFLRFGDDYRPGLRRRKQGDKKTFDECVAEGGSDCAPEKLWLQIPFFCGHSSECWNVGSRWAMDQAKSNLINEYFLVGVTEELEDFIMLLEAALPRFFRGATDLYRTGKKSHLRKTTEKKLPTKQTIAKLQQSDIWKMENEFYEFALEQFQFIRAHAVREKDGDLYILAQNFFYEKIYPKSN.

Topologically, residues 1–11 (MGLLRIMMPPK) are cytoplasmic. The chain crosses the membrane as a helical; Signal-anchor for type II membrane protein span at residues 12 to 28 (LQLLAVVAFAVAMLFLE). Positions 24–51 (MLFLENQIQKLEESRAKLERAIARHEVR) form a coiled coil. The Lumenal portion of the chain corresponds to 29-356 (NQIQKLEESR…FYEKIYPKSN (328 aa)). Adenosine 3',5'-bisphosphate is bound by residues lysine 83, threonine 84, alanine 85, serine 86, threonine 87, and serine 88. N-linked (GlcNAc...) asparagine glycosylation is found at asparagine 108 and asparagine 127. Residues histidine 140 and histidine 142 contribute to the active site. Positions 164 and 172 each coordinate adenosine 3',5'-bisphosphate. 2 disulfides stabilise this stretch: cysteine 201–cysteine 209 and cysteine 222–cysteine 228. Adenosine 3',5'-bisphosphate is bound by residues tyrosine 279, serine 285, threonine 290, and lysine 293.

The protein belongs to the sulfotransferase 3 family. Homotrimer. Interacts with the C5-epimerase GLCE. In terms of processing, N-glycosylated. Widely expressed. Expressed at higher level in lung and brain. Weakly expressed in spleen.

The protein localises to the golgi apparatus membrane. In terms of biological role, catalyzes the transfer of a sulfo group from 3'-phospho-5'-adenylyl sulfate (PAPS) to the 2-OH position of iduronic acid (IdoA) or glucuronic acid (GlcA) within the heparan sulfate (HS) chain and participates in HS biosynthesis. Required for metanephric development of kidney formation, suggesting that 2-O-sulfation within HS is essential for signaling between ureteric bud and metanephric mesenchyme. The protein is Heparan sulfate 2-O-sulfotransferase 1 of Mus musculus (Mouse).